We begin with the raw amino-acid sequence, 589 residues long: Proline--tRNA ligase (589 aa).

It belongs to the class-II aminoacyl-tRNA synthetase family. ProS type 1 subfamily. In terms of assembly, homodimer.

It localises to the cytoplasm. The enzyme catalyses tRNA(Pro) + L-proline + ATP = L-prolyl-tRNA(Pro) + AMP + diphosphate. In terms of biological role, catalyzes the attachment of proline to tRNA(Pro) in a two-step reaction: proline is first activated by ATP to form Pro-AMP and then transferred to the acceptor end of tRNA(Pro). As ProRS can inadvertently accommodate and process non-cognate amino acids such as alanine and cysteine, to avoid such errors it has two additional distinct editing activities against alanine. One activity is designated as 'pretransfer' editing and involves the tRNA(Pro)-independent hydrolysis of activated Ala-AMP. The other activity is designated 'posttransfer' editing and involves deacylation of mischarged Ala-tRNA(Pro). The misacylated Cys-tRNA(Pro) is not edited by ProRS. This is Proline--tRNA ligase from Nocardioides sp. (strain ATCC BAA-499 / JS614).